The following is a 350-amino-acid chain: Biotin synthase 1 (350 aa).

The Radical SAM core domain maps to 71-296 (EEVEVEGIIS…KTILRFAGGR (226 aa)). Residues Cys86, Cys90, and Cys93 each coordinate [4Fe-4S] cluster. The [2Fe-2S] cluster site is built by Cys129, Cys221, and Arg291.

The protein belongs to the radical SAM superfamily. Biotin synthase family. As to quaternary structure, homodimer. The cofactor is [4Fe-4S] cluster. It depends on [2Fe-2S] cluster as a cofactor.

It catalyses the reaction (4R,5S)-dethiobiotin + (sulfur carrier)-SH + 2 reduced [2Fe-2S]-[ferredoxin] + 2 S-adenosyl-L-methionine = (sulfur carrier)-H + biotin + 2 5'-deoxyadenosine + 2 L-methionine + 2 oxidized [2Fe-2S]-[ferredoxin]. It functions in the pathway cofactor biosynthesis; biotin biosynthesis; biotin from 7,8-diaminononanoate: step 2/2. Its function is as follows. Catalyzes the conversion of dethiobiotin (DTB) to biotin by the insertion of a sulfur atom into dethiobiotin via a radical-based mechanism. The sequence is that of Biotin synthase 1 from Corynebacterium diphtheriae (strain ATCC 700971 / NCTC 13129 / Biotype gravis).